Here is a 505-residue protein sequence, read N- to C-terminus: Lysine--tRNA ligase (505 aa).

Glu-415 and Glu-422 together coordinate Mg(2+).

Belongs to the class-II aminoacyl-tRNA synthetase family. As to quaternary structure, homodimer. It depends on Mg(2+) as a cofactor.

Its subcellular location is the cytoplasm. The enzyme catalyses tRNA(Lys) + L-lysine + ATP = L-lysyl-tRNA(Lys) + AMP + diphosphate. This is Lysine--tRNA ligase from Serratia proteamaculans (strain 568).